Consider the following 146-residue polypeptide: MTKKIEEKIGGVIESLGYLLYDVSLVKENEQHVLRVSLKNPNGAVSLDICQQVSEIISPLLDVCDFIQDAYILEVSSMGLERTLKTPKHFKLSLGEKVEVKLTNKESFQAVLKDANDLSADFELEDHAIKSVEYKDLKKVKTLFEW.

This sequence belongs to the RimP family.

Its subcellular location is the cytoplasm. Functionally, required for maturation of 30S ribosomal subunits. In Helicobacter pylori (strain ATCC 700392 / 26695) (Campylobacter pylori), this protein is Ribosome maturation factor RimP.